Reading from the N-terminus, the 232-residue chain is Probable fimbrial chaperone LpfB (232 aa).

A signal peptide spans 1-24 (MDRMMKSKFVALALSLFLSQSVLA).

Belongs to the periplasmic pilus chaperone family.

Its subcellular location is the periplasm. Part of the lpfABCC'DE fimbrial operon. LP fimbriae may participate in the interaction with eukaryotic cells by assisting in microcolony formation. The chain is Probable fimbrial chaperone LpfB (lpfB) from Escherichia coli O157:H7.